The sequence spans 302 residues: tRNA pseudouridine synthase B (302 aa).

The active-site Nucleophile is Asp45.

Belongs to the pseudouridine synthase TruB family. Type 1 subfamily.

The catalysed reaction is uridine(55) in tRNA = pseudouridine(55) in tRNA. Responsible for synthesis of pseudouridine from uracil-55 in the psi GC loop of transfer RNAs. The chain is tRNA pseudouridine synthase B from Francisella tularensis subsp. novicida (strain U112).